We begin with the raw amino-acid sequence, 56 residues long: Genome polyprotein (56 aa).

Residues 1 to 30 (ETMLDRIASGDLESSVDDPRSAEDKRFESH) are disordered. Residues 17 to 30 (DDPRSAEDKRFESH) are compositionally biased toward basic and acidic residues.

The protein belongs to the picornaviridae polyprotein family. In terms of assembly, homopentamer. Homooligomer. As to quaternary structure, interacts with capsid protein VP2. Interacts with capsid protein VP3. Post-translationally, specific enzymatic cleavages by viral protease in vivo yield a variety of precursors and mature proteins. Polyprotein processing intermediates are produced, such as P1-2A which is a functional precursor of the structural proteins, VP0 which is a VP4-VP2 precursor, VP1-2A precursor, 3ABC precursor which is a stable and catalytically active precursor of 3A, 3B and 3C proteins, 3AB and 3CD precursors. The assembly signal 2A is removed from VP1-2A by a host protease, possibly host Cathepsin L. This cleavage occurs over a region of 3 amino-acids probably generating VP1 proteins with heterogeneous C-termini. In terms of processing, the assembly signal 2A is removed from VP1-2A by a host protease, possibly host Cathepsin L in naked virions. This cleavage does not occur in enveloped virions. This cleavage occurs over a region of 3 amino-acids probably generating VP1 proteins with heterogeneous C-termini.

It localises to the virion. The protein localises to the host endosome. It is found in the host multivesicular body. In terms of biological role, capsid proteins VP1, VP2, and VP3 form a closed capsid enclosing the viral positive strand RNA genome. All these proteins contain a beta-sheet structure called beta-barrel jelly roll. Together they form an icosahedral capsid (T=3) composed of 60 copies of each VP1, VP2, and VP3, with a diameter of approximately 300 Angstroms. VP1 is situated at the 12 fivefold axes, whereas VP2 and VP3 are located at the quasi-sixfold axes. The naked capsid interacts with the host receptor HAVCR1 to provide virion attachment to and probably entry into the target cell. Its function is as follows. Precursor component of immature procapsids that corresponds to an extended form of the structural protein VP1. After maturation, possibly by the host Cathepsin L, the assembly signal 2A is cleaved to give rise to the mature VP1 protein. The chain is Genome polyprotein from Callithrix (Owl-faced monkey).